A 307-amino-acid polypeptide reads, in one-letter code: Serine/threonine-protein phosphatase PP2A-1 catalytic subunit (307 aa).

Residues Asp54, His56, Asp82, and Asn114 each coordinate Mn(2+). His115 (proton donor) is an active-site residue. Mn(2+)-binding residues include His164 and His238. Residues 286 to 307 (FEPAPRRGAEGEVNRRTPDYFL) form a disordered region. The span at 289–307 (APRRGAEGEVNRRTPDYFL) shows a compositional bias: basic and acidic residues.

This sequence belongs to the PPP phosphatase family. PP-2A subfamily. Requires Mn(2+) as cofactor.

It carries out the reaction O-phospho-L-seryl-[protein] + H2O = L-seryl-[protein] + phosphate. The enzyme catalyses O-phospho-L-threonyl-[protein] + H2O = L-threonyl-[protein] + phosphate. The protein is Serine/threonine-protein phosphatase PP2A-1 catalytic subunit of Acetabularia peniculus (Green alga).